Reading from the N-terminus, the 57-residue chain is Probable mRNA interferase HicA 1 (57 aa).

It belongs to the HicA mRNA interferase family. Probably forms a complex with the cognate antitoxin HicB 1 which inhibits the mRNA interferase activity.

Functionally, toxic component of a type II toxin-antitoxin (TA) system. A probable translation-independent mRNA interferase. The sequence is that of Probable mRNA interferase HicA 1 (hicA1) from Photorhabdus laumondii subsp. laumondii (strain DSM 15139 / CIP 105565 / TT01) (Photorhabdus luminescens subsp. laumondii).